A 276-amino-acid polypeptide reads, in one-letter code: NH(3)-dependent NAD(+) synthetase (276 aa).

Residue 47–54 coordinates ATP; sequence GISGGQDS. Residue aspartate 53 participates in Mg(2+) binding. Residue arginine 141 coordinates deamido-NAD(+). Threonine 161 contacts ATP. Position 166 (glutamate 166) interacts with Mg(2+). Deamido-NAD(+) is bound by residues lysine 174 and aspartate 181. ATP is bound by residues lysine 190 and threonine 212. Position 261 to 262 (261 to 262) interacts with deamido-NAD(+); the sequence is HK.

The protein belongs to the NAD synthetase family. In terms of assembly, homodimer.

The catalysed reaction is deamido-NAD(+) + NH4(+) + ATP = AMP + diphosphate + NAD(+) + H(+). It participates in cofactor biosynthesis; NAD(+) biosynthesis; NAD(+) from deamido-NAD(+) (ammonia route): step 1/1. Functionally, catalyzes the ATP-dependent amidation of deamido-NAD to form NAD. Uses ammonia as a nitrogen source. This chain is NH(3)-dependent NAD(+) synthetase, found in Levilactobacillus brevis (strain ATCC 367 / BCRC 12310 / CIP 105137 / JCM 1170 / LMG 11437 / NCIMB 947 / NCTC 947) (Lactobacillus brevis).